The primary structure comprises 131 residues: Small ribosomal subunit protein bS16 (131 aa).

Positions 87–131 (PGAEGTYRVPTANTKPPRIPGGGAAKAVEAPAEAPAEAETPASES) are disordered. Low complexity predominate over residues 111-131 (AKAVEAPAEAPAEAETPASES).

It belongs to the bacterial ribosomal protein bS16 family.

The chain is Small ribosomal subunit protein bS16 from Kineococcus radiotolerans (strain ATCC BAA-149 / DSM 14245 / SRS30216).